Consider the following 1079-residue polypeptide: Psi-producing oxygenase A (1079 aa).

The segment at 105–446 (TNTFLTTLWN…DGSYDDNDLV (342 aa)) is linoleate 8R-lipoxygenase. His202 lines the heme b pocket. Residue Tyr374 is part of the active site. His377 serves as a coordination point for heme b. A 9,12-octadecadienoate 8-hydroperoxide 8R-isomerase region spans residues 654 to 1079 (QFINSHSACM…WDGDLPEVKE (426 aa)).

The protein belongs to the peroxidase family. In terms of assembly, homotetramer. Heme b is required as a cofactor.

The catalysed reaction is (9Z,12Z)-octadecadienoate + O2 = (8R,9Z,12Z)-8-hydroperoxyoctadeca-9,12-dienoate. It carries out the reaction (8R,9Z,12Z)-8-hydroperoxyoctadeca-9,12-dienoate = (5S,8R,9Z,12Z)-5,8-dihydroxyoctadeca-9,12-dienoate. Functionally, bifunctional heme-containing enzyme that oxidizes linoleic acid to (8R,9Z,12Z)-8-hydroperoxyoctadeca-9,12-dienoate (within the N-terminal heme peroxidase domain), which is subsequently isomerized to (5S,8R,9Z,12Z)-5,8-dihydroxyoctadeca-9,12-dienoate (within the C-terminal P450 heme thiolate domain). Oxidized unsaturated fatty acids, so-called oxylipins, derived from endogenous fatty acids, influence the development of the asexual conidiophores and sexual cleistothecia and regulate the secondary metabolism. These substances were collectively named psi factors and are primarily a mixture of hydroxylated oleic, linoleic and alpha-linolenic acids. They are termed psi-beta, psi-alpha, and psi-gamma, respectively. Oxylipins may also serve as activators of mammalian immune responses contributing to enhanced resistance to opportunistic fungi and as factors that modulate fungal development contributing to resistance to host defenses. In Aspergillus fumigatus (strain CBS 144.89 / FGSC A1163 / CEA10) (Neosartorya fumigata), this protein is Psi-producing oxygenase A (ppoA).